The primary structure comprises 396 residues: Elongation factor Tu (396 aa).

The 197-residue stretch at 10–206 folds into the tr-type G domain; that stretch reads KPHVNVGTIG…ALDTYIPLPE (197 aa). Residues 19–26 form a G1 region; it reads GHVDHGKT. GTP is bound at residue 19–26; it reads GHVDHGKT. Position 26 (Thr-26) interacts with Mg(2+). Residues 60 to 64 are G2; it reads GITIN. A G3 region spans residues 81–84; it reads DCPG. Residues 81-85 and 136-139 contribute to the GTP site; these read DCPGH and NKCD. Residues 136 to 139 form a G4 region; sequence NKCD. A G5 region spans residues 174-176; sequence SAK.

The protein belongs to the TRAFAC class translation factor GTPase superfamily. Classic translation factor GTPase family. EF-Tu/EF-1A subfamily. Monomer.

The protein resides in the cytoplasm. The catalysed reaction is GTP + H2O = GDP + phosphate + H(+). GTP hydrolase that promotes the GTP-dependent binding of aminoacyl-tRNA to the A-site of ribosomes during protein biosynthesis. This Polaromonas sp. (strain JS666 / ATCC BAA-500) protein is Elongation factor Tu.